The sequence spans 51 residues: Ribosome biogenesis protein Nop10 (51 aa).

Belongs to the NOP10 family.

In terms of biological role, involved in ribosome biogenesis; more specifically in 18S rRNA pseudouridylation and in cleavage of pre-rRNA. The protein is Ribosome biogenesis protein Nop10 of Methanococcus maripaludis (strain C5 / ATCC BAA-1333).